The primary structure comprises 244 residues: Biosynthetic peptidoglycan transglycosylase (244 aa).

A helical transmembrane segment spans residues 26–46 (FLSYFIGLTVALTFLFRFVPI).

This sequence belongs to the glycosyltransferase 51 family.

Its subcellular location is the cell inner membrane. The enzyme catalyses [GlcNAc-(1-&gt;4)-Mur2Ac(oyl-L-Ala-gamma-D-Glu-L-Lys-D-Ala-D-Ala)](n)-di-trans,octa-cis-undecaprenyl diphosphate + beta-D-GlcNAc-(1-&gt;4)-Mur2Ac(oyl-L-Ala-gamma-D-Glu-L-Lys-D-Ala-D-Ala)-di-trans,octa-cis-undecaprenyl diphosphate = [GlcNAc-(1-&gt;4)-Mur2Ac(oyl-L-Ala-gamma-D-Glu-L-Lys-D-Ala-D-Ala)](n+1)-di-trans,octa-cis-undecaprenyl diphosphate + di-trans,octa-cis-undecaprenyl diphosphate + H(+). It participates in cell wall biogenesis; peptidoglycan biosynthesis. Its function is as follows. Peptidoglycan polymerase that catalyzes glycan chain elongation from lipid-linked precursors. The sequence is that of Biosynthetic peptidoglycan transglycosylase from Mannheimia succiniciproducens (strain KCTC 0769BP / MBEL55E).